A 458-amino-acid chain; its full sequence is Pyruvate kinase (458 aa).

A substrate-binding site is contributed by R33. K(+)-binding residues include N35, S37, and D67. ATP is bound at residue N35–H38. 2 residues coordinate ATP: R74 and K148. E214 provides a ligand contact to Mg(2+). Substrate is bound by residues G237, D238, and T270. D238 contributes to the Mg(2+) binding site.

Belongs to the pyruvate kinase family. In terms of assembly, homotetramer. Requires a divalent metal cation as cofactor.

The catalysed reaction is pyruvate + ATP = phosphoenolpyruvate + ADP + H(+). It functions in the pathway carbohydrate degradation; glycolysis; pyruvate from D-glyceraldehyde 3-phosphate: step 5/5. Not activated by classical allosteric effectors. In Aeropyrum pernix (strain ATCC 700893 / DSM 11879 / JCM 9820 / NBRC 100138 / K1), this protein is Pyruvate kinase (pyk).